Reading from the N-terminus, the 566-residue chain is APC membrane recruitment protein 2 (566 aa).

4 disordered regions span residues 120–176 (KKNG…PGLI), 192–237 (TQKP…SPCS), 277–307 (VTGC…GKKV), and 342–533 (MIPP…RTKI). Composition is skewed to basic and acidic residues over residues 123 to 134 (GKSENVRGEQAE), 155 to 168 (SKKD…KEGA), and 192 to 204 (TQKP…KSTE). Basic and acidic residues-rich tracts occupy residues 364–377 (REVK…DRNA) and 389–411 (YRKE…RNSD). The span at 464-476 (PPLSHSHSKPLSP) shows a compositional bias: low complexity. Polar residues-rich tracts occupy residues 477 to 489 (VTTS…ASSN) and 504 to 517 (HTTN…SGSA).

This sequence belongs to the Amer family.

It is found in the cell membrane. Functionally, negative regulator of the canonical Wnt signaling pathway involved in neuroectodermal patterning. Acts by specifically binding phosphatidylinositol 4,5-bisphosphate (PtdIns(4,5)P2), translocating to the cell membrane and interacting with key regulators of the canonical Wnt signaling pathway, such as components of the beta-catenin destruction complex. This is APC membrane recruitment protein 2 (amer2) from Xenopus tropicalis (Western clawed frog).